The primary structure comprises 157 residues: MPHRQKLAKIELVEKYQVRRAAEVEHERAVAVYDLLEENYFAPNGDFIGPYALYIKLEDTRLIFDVRKEDETPLVQVPLPLKTFQSIVKDYFMICESYFAAIKKSTPSQIEAIDMGRRGLHNEGSELLRERLGGKIDVDFDTARRLFTLICVLHIRG.

This sequence belongs to the UPF0262 family.

The polypeptide is UPF0262 protein amb3341 (Paramagnetospirillum magneticum (strain ATCC 700264 / AMB-1) (Magnetospirillum magneticum)).